A 142-amino-acid polypeptide reads, in one-letter code: Large ribosomal subunit protein uL11 (142 aa).

This sequence belongs to the universal ribosomal protein uL11 family. In terms of assembly, part of the ribosomal stalk of the 50S ribosomal subunit. Interacts with L10 and the large rRNA to form the base of the stalk. L10 forms an elongated spine to which L12 dimers bind in a sequential fashion forming a multimeric L10(L12)X complex. Post-translationally, one or more lysine residues are methylated.

Its function is as follows. Forms part of the ribosomal stalk which helps the ribosome interact with GTP-bound translation factors. The protein is Large ribosomal subunit protein uL11 of Shewanella oneidensis (strain ATCC 700550 / JCM 31522 / CIP 106686 / LMG 19005 / NCIMB 14063 / MR-1).